A 41-amino-acid polypeptide reads, in one-letter code: Phospholipase A2 homolog nigroviriditoxin acidic subunit A (41 aa).

This sequence belongs to the phospholipase A2 family. Group II subfamily. D49 sub-subfamily. In terms of assembly, nigroviriditoxin is a heterodimer of an acidic subunit A and a basic subunit B. As to expression, expressed by the venom gland.

The protein localises to the secreted. In terms of biological role, heterodimer A-B: Nigroviriditoxin possesses phospholipase A2 (PLA2) activity. It consists of a non-covalent association of a basic PLA2 subunit B with a non-enzymatic subunit A. Functionally, subunit A: The acidic subunit of nigroviriditoxin probably is a heterotrimer of three disulfide-linked chains generated by post-translational maturation of a PLA2-like precursor. It appears to have no PLA2 activity of its own, instead inhibiting the catalytic activity of subunit B. It is not toxic to mice by itself but increases toxicity of subunit B. The polypeptide is Phospholipase A2 homolog nigroviriditoxin acidic subunit A (Bothriechis nigroviridis (Black-speckled palm pit viper)).